Reading from the N-terminus, the 218-residue chain is N-(5'-phosphoribosyl)anthranilate isomerase (218 aa).

The protein belongs to the TrpF family.

It carries out the reaction N-(5-phospho-beta-D-ribosyl)anthranilate = 1-(2-carboxyphenylamino)-1-deoxy-D-ribulose 5-phosphate. It functions in the pathway amino-acid biosynthesis; L-tryptophan biosynthesis; L-tryptophan from chorismate: step 3/5. This Halalkalibacterium halodurans (strain ATCC BAA-125 / DSM 18197 / FERM 7344 / JCM 9153 / C-125) (Bacillus halodurans) protein is N-(5'-phosphoribosyl)anthranilate isomerase.